The chain runs to 134 residues: Prefoldin subunit 4 (134 aa).

The residue at position 2 (alanine 2) is an N-acetylalanine. Serine 125 is subject to Phosphoserine.

It belongs to the prefoldin subunit beta family. In terms of assembly, heterohexamer of two PFD-alpha type and four PFD-beta type subunits. Interacts with URI1; the interaction is phosphorylation-dependent and occurs in a growth-dependent manner.

It is found in the nucleus. The protein resides in the cytoplasm. It localises to the mitochondrion. In terms of biological role, binds specifically to cytosolic chaperonin (c-CPN) and transfers target proteins to it. Binds to nascent polypeptide chain and promotes folding in an environment in which there are many competing pathways for nonnative proteins. The sequence is that of Prefoldin subunit 4 (PFDN4) from Bos taurus (Bovine).